Reading from the N-terminus, the 335-residue chain is Olfactory receptor 52B6 (335 aa).

The Extracellular segment spans residues 1 to 45; that stretch reads MAQVRALHKIMALFSANSIGAMNNSDTRIAGCFLTGIPGLEQLHI. An N-linked (GlcNAc...) asparagine glycan is attached at N23. The chain crosses the membrane as a helical span at residues 46 to 66; the sequence is WLSIPFCIMYITALEGNGILI. The Cytoplasmic portion of the chain corresponds to 67–74; that stretch reads CVILSQAI. Residues 75–95 traverse the membrane as a helical segment; the sequence is LHEPMYIFLSMLASADVLLST. The Extracellular portion of the chain corresponds to 96–119; that stretch reads TTMPKALANLWLGYSLISFDGCLT. C117 and C208 are oxidised to a cystine. A helical membrane pass occupies residues 120-139; the sequence is QMFFIHFLFIHSAVLLAMAF. The Cytoplasmic segment spans residues 140 to 158; that stretch reads DRYVAICSPLRYVTILTSK. Residues 159–179 form a helical membrane-spanning segment; the sequence is VIGKIVTAALSHSFIIMFPSI. Over 180 to 215 the chain is Extracellular; that stretch reads FLLEHLHYCQINIIAHTFCEHMGIAHLSCSDISINV. The helical transmembrane segment at 216 to 236 threads the bilayer; the sequence is WYGLAAALLSTGLDIMLITVS. At 237 to 256 the chain is on the cytoplasmic side; that stretch reads YIHILQAVFRLLSQDARSKA. Residues 257–277 form a helical membrane-spanning segment; that stretch reads LSTCGSHICVILLFYVPALFS. At 278-293 the chain is on the extracellular side; it reads VFAYRFGGRSVPCYVH. Residues 294-314 traverse the membrane as a helical segment; it reads ILLASLYVVIPPMLNPVIYGV. Topologically, residues 315–335 are cytoplasmic; the sequence is RTKPILEGAKQMFSNLAKGSK.

The protein belongs to the G-protein coupled receptor 1 family.

The protein localises to the cell membrane. Odorant receptor. The chain is Olfactory receptor 52B6 (OR52B6) from Homo sapiens (Human).